We begin with the raw amino-acid sequence, 236 residues long: 5'-methylthioadenosine/S-adenosylhomocysteine nucleosidase (236 aa).

Residue E12 is the Proton acceptor of the active site. Substrate-binding positions include G78, I153, and 174–175; that span reads ME. Residue D198 is the Proton donor of the active site.

It belongs to the PNP/UDP phosphorylase family. MtnN subfamily.

It catalyses the reaction S-adenosyl-L-homocysteine + H2O = S-(5-deoxy-D-ribos-5-yl)-L-homocysteine + adenine. The catalysed reaction is S-methyl-5'-thioadenosine + H2O = 5-(methylsulfanyl)-D-ribose + adenine. The enzyme catalyses 5'-deoxyadenosine + H2O = 5-deoxy-D-ribose + adenine. Its pathway is amino-acid biosynthesis; L-methionine biosynthesis via salvage pathway; S-methyl-5-thio-alpha-D-ribose 1-phosphate from S-methyl-5'-thioadenosine (hydrolase route): step 1/2. Catalyzes the irreversible cleavage of the glycosidic bond in both 5'-methylthioadenosine (MTA) and S-adenosylhomocysteine (SAH/AdoHcy) to adenine and the corresponding thioribose, 5'-methylthioribose and S-ribosylhomocysteine, respectively. Also cleaves 5'-deoxyadenosine, a toxic by-product of radical S-adenosylmethionine (SAM) enzymes, into 5-deoxyribose and adenine. This Shewanella baltica (strain OS223) protein is 5'-methylthioadenosine/S-adenosylhomocysteine nucleosidase.